We begin with the raw amino-acid sequence, 113 residues long: Putative single-stranded DNA-binding protein ycf41 (113 aa).

The SSB domain occupies 1 to 101 (MNYASFIIKI…EVSGFKIYPF (101 aa)).

Its subcellular location is the plastid. It is found in the chloroplast. The protein is Putative single-stranded DNA-binding protein ycf41 (ycf41) of Trieres chinensis (Marine centric diatom).